The chain runs to 244 residues: LOB domain-containing protein 17 (244 aa).

Residues 6 to 108 form the LOB domain; that stretch reads SPCGACKFLR…TQLEILKQQA (103 aa).

Belongs to the LOB domain-containing protein family. Expressed in roots, stems, leaves and flowers.

The protein is LOB domain-containing protein 17 (LBD17) of Arabidopsis thaliana (Mouse-ear cress).